Here is a 688-residue protein sequence, read N- to C-terminus: Small ribosomal subunit protein mS39 (688 aa).

Residues 1 to 37 (MASVASARWLRVSCGLCVPLTARRAGPCGRTPSSRFY) constitute a mitochondrion transit peptide. K126 carries the N6-acetyllysine modification. PPR repeat units follow at residues 149–183 (IEEISEAALQERIKLKKVKASVDIFDQLLQAGTTV), 184–219 (SLETTNSLLDLLCYYGNQEPSTNYNFQQHEQTEELE), 258–292 (NAHSYCTMIRGMVKHRAHTQALSMYTELLNNRLRA), 293–333 (DVHT…NVKP), 334–370 (NLQTFNTILKCLRRFYAFGKLPALQTFREMKAIGIEP), 371–412 (SLAT…SPKD), 415–449 (DDMFFQSAMRVCSSLRDLELAYQVHGLLNTGDNRK), 457–491 (RNFYYSKFFSLLCLMEQIDVTLKWYKDLIPSVFFP), 492–526 (HSQTLIDLLQALDVANRLEMIPQIWKDSKEYGHTF), and 575–609 (PANSLNYIAILFLRAGRTQEAWKMLGLFRKHNKIP). The tract at residues 667–688 (GDLTALTSDSESDSDSDTSKDK) is disordered.

Belongs to the mitochondrion-specific ribosomal protein mS39 family. As to quaternary structure, component of the mitochondrial ribosome small subunit (28S) which comprises a 12S rRNA and about 30 distinct proteins. Associated with the 12S mitochondrial rRNA (12S mt-rRNA).

The protein localises to the mitochondrion. In terms of biological role, mitochondrial RNA-binding protein that has a role in mitochondrial translation. The protein is Small ribosomal subunit protein mS39 (PTCD3) of Bos taurus (Bovine).